A 737-amino-acid polypeptide reads, in one-letter code: LIMR family protein R05D3.2 (737 aa).

The span at Ala280–Val293 shows a compositional bias: acidic residues. Residues Ala280–Asp416 form a disordered region. The segment covering Glu303–Asp318 has biased composition (basic and acidic residues).

Belongs to the LIMR family.

The chain is LIMR family protein R05D3.2 from Caenorhabditis elegans.